The following is a 428-amino-acid chain: U2 small nuclear ribonucleoprotein auxiliary factor 35 kDa subunit-related protein 2-like (428 aa).

The segment at 1–51 is disordered; sequence MASRQTAIPEKLSRKQYKAAMKKEKRKKRRQKMARLRALEAPPEEDDDVSA. Residues 23 to 35 are compositionally biased toward basic residues; the sequence is KEKRKKRRQKMAR. A compositionally biased stretch (acidic residues) spans 42–51; sequence PPEEDDDVSA. Phosphoserine is present on S50. Residues 157 to 185 form a C3H1-type 1 zinc finger; that stretch reads EKYRPSCPFYNKTGACRFGNRCSRKHDFP. The RRM domain occupies 189–295; sequence PTLLVKSMFT…RQLQCEFCPV (107 aa). Residues 297 to 324 form a C3H1-type 2 zinc finger; sequence RWKVAICGLFEMQKCPKGKHCNFLHVFR. The tract at residues 339 to 428 is disordered; the sequence is MSPPAWTGSS…PGPQSQSHRT (90 aa). Phosphoserine is present on S340. Positions 351-366 are enriched in basic and acidic residues; the sequence is NSDRRERKDHHEEYYS. A compositionally biased stretch (low complexity) spans 367–377; sequence KSRSYHSGSYH. At S375 the chain carries Phosphoserine. Residues 389-410 are compositionally biased toward basic residues; the sequence is SPHRWKKSHKQTTKSHERHSSR. Positions 419-428 are enriched in polar residues; the sequence is PGPQSQSHRT.

In terms of assembly, interacts with SF3B1. Interacts with ZCRB1. In terms of tissue distribution, highest expression levels are detected in the brain, and lower expression levels in other tissues like epididymis, testis, bone marrow or muscle. In testis, expressed in both Sertoli and spermatogenic cell.

Its subcellular location is the nucleus. Functionally, plays a role in splicing of the U12-type introns. Implicated also in removal of U2 introns positioned adjacent to a U12 intron. The sequence is that of U2 small nuclear ribonucleoprotein auxiliary factor 35 kDa subunit-related protein 2-like from Mus musculus (Mouse).